The primary structure comprises 446 residues: Tubulin gamma chain (446 aa).

Residue 142–148 (AGGTGSG) coordinates GTP.

The protein belongs to the tubulin family. In terms of assembly, interacts with mto1. Interacts with mto2.

The protein resides in the cytoplasm. The protein localises to the cytoskeleton. It localises to the microtubule organizing center. Its subcellular location is the spindle pole body. In terms of biological role, tubulin is the major constituent of microtubules. The gamma chain is found at microtubule organizing centers (MTOC) such as the spindle poles or the centrosome, suggesting that it is involved in the minus-end nucleation of microtubule assembly. The sequence is that of Tubulin gamma chain from Schizosaccharomyces pombe (strain 972 / ATCC 24843) (Fission yeast).